The sequence spans 135 residues: uncharacterized protein (135 aa).

This is an uncharacterized protein from Magallana gigas (Pacific oyster).